The sequence spans 234 residues: Sugar fermentation stimulation protein homolog (234 aa).

Belongs to the SfsA family.

In Shewanella piezotolerans (strain WP3 / JCM 13877), this protein is Sugar fermentation stimulation protein homolog.